The primary structure comprises 311 residues: Putative RNA-binding protein R05D3.8 (311 aa).

In terms of domain architecture, RRM spans 155-235 (KRLFVSYFPL…RRAVLKESVK (81 aa)). Polar residues predominate over residues 261–270 (TPSRPVTSVH). A disordered region spans residues 261–311 (TPSRPVTSVHASSSASSNHYDPSAAAGYAPLYHQPPESDPLSQCGYGPRKW).

The polypeptide is Putative RNA-binding protein R05D3.8 (Caenorhabditis elegans).